The primary structure comprises 641 residues: Calpain-6 (641 aa).

The 318-residue stretch at 26–343 folds into the Calpain catalytic domain; that stretch reads LFCDPTFLPE…FHKLNVCRNV (318 aa). Residues 344-495 are domain III; it reads NNPIFGRKEL…IFSEVPVQLR (152 aa). In terms of domain architecture, C2 spans 498–621; that stretch reads TLDMPKMSCW…YLRKKGGPTA (124 aa).

It belongs to the peptidase C2 family. Interacts (via domain III) with microtubules. Interacts (via domain II) with ARHGEF2 (via the N-terminal zinc finger). Expressed only in placenta.

It localises to the cytoplasm. The protein resides in the perinuclear region. Its subcellular location is the cytoskeleton. The protein localises to the spindle. Functionally, microtubule-stabilizing protein that may be involved in the regulation of microtubule dynamics and cytoskeletal organization. May act as a regulator of RAC1 activity through interaction with ARHGEF2 to control lamellipodial formation and cell mobility. Does not seem to have protease activity as it has lost the active site residues. This is Calpain-6 (CAPN6) from Homo sapiens (Human).